The primary structure comprises 430 residues: Serine--tRNA ligase (430 aa).

Residue 237 to 239 (TAE) coordinates L-serine. An ATP-binding site is contributed by 268-270 (RSE). Position 291 (Glu-291) interacts with L-serine. 355-358 (EISS) contributes to the ATP binding site. Ser-391 contacts L-serine.

The protein belongs to the class-II aminoacyl-tRNA synthetase family. Type-1 seryl-tRNA synthetase subfamily. As to quaternary structure, homodimer. The tRNA molecule binds across the dimer.

It localises to the cytoplasm. It carries out the reaction tRNA(Ser) + L-serine + ATP = L-seryl-tRNA(Ser) + AMP + diphosphate + H(+). It catalyses the reaction tRNA(Sec) + L-serine + ATP = L-seryl-tRNA(Sec) + AMP + diphosphate + H(+). It participates in aminoacyl-tRNA biosynthesis; selenocysteinyl-tRNA(Sec) biosynthesis; L-seryl-tRNA(Sec) from L-serine and tRNA(Sec): step 1/1. Catalyzes the attachment of serine to tRNA(Ser). Is also able to aminoacylate tRNA(Sec) with serine, to form the misacylated tRNA L-seryl-tRNA(Sec), which will be further converted into selenocysteinyl-tRNA(Sec). The polypeptide is Serine--tRNA ligase (Klebsiella pneumoniae subsp. pneumoniae (strain ATCC 700721 / MGH 78578)).